Reading from the N-terminus, the 306-residue chain is UDP-3-O-acyl-N-acetylglucosamine deacetylase (306 aa).

The Zn(2+) site is built by His79, His238, and Asp242. The Proton donor role is filled by His265.

This sequence belongs to the LpxC family. Zn(2+) serves as cofactor.

It carries out the reaction a UDP-3-O-[(3R)-3-hydroxyacyl]-N-acetyl-alpha-D-glucosamine + H2O = a UDP-3-O-[(3R)-3-hydroxyacyl]-alpha-D-glucosamine + acetate. It functions in the pathway glycolipid biosynthesis; lipid IV(A) biosynthesis; lipid IV(A) from (3R)-3-hydroxytetradecanoyl-[acyl-carrier-protein] and UDP-N-acetyl-alpha-D-glucosamine: step 2/6. Its function is as follows. Catalyzes the hydrolysis of UDP-3-O-myristoyl-N-acetylglucosamine to form UDP-3-O-myristoylglucosamine and acetate, the committed step in lipid A biosynthesis. The sequence is that of UDP-3-O-acyl-N-acetylglucosamine deacetylase from Shewanella halifaxensis (strain HAW-EB4).